Consider the following 995-residue polypeptide: Bifunctional glutamine synthetase adenylyltransferase/adenylyl-removing enzyme (995 aa).

Residues 1 to 474 (MNHSAPGNAD…HYEKLFEGDD (474 aa)) are adenylyl removase. 2 glnE regions span residues 122 to 333 (RRMK…MKRQ) and 637 to 853 (SYEE…MRRA). An adenylyl transferase region spans residues 479–995 (AKLPALDYSA…LEGTSPASAR (517 aa)).

Belongs to the GlnE family. Mg(2+) is required as a cofactor.

It carries out the reaction [glutamine synthetase]-O(4)-(5'-adenylyl)-L-tyrosine + phosphate = [glutamine synthetase]-L-tyrosine + ADP. The enzyme catalyses [glutamine synthetase]-L-tyrosine + ATP = [glutamine synthetase]-O(4)-(5'-adenylyl)-L-tyrosine + diphosphate. Its function is as follows. Involved in the regulation of glutamine synthetase GlnA, a key enzyme in the process to assimilate ammonia. When cellular nitrogen levels are high, the C-terminal adenylyl transferase (AT) inactivates GlnA by covalent transfer of an adenylyl group from ATP to specific tyrosine residue of GlnA, thus reducing its activity. Conversely, when nitrogen levels are low, the N-terminal adenylyl removase (AR) activates GlnA by removing the adenylyl group by phosphorolysis, increasing its activity. The regulatory region of GlnE binds the signal transduction protein PII (GlnB) which indicates the nitrogen status of the cell. This is Bifunctional glutamine synthetase adenylyltransferase/adenylyl-removing enzyme from Bradyrhizobium diazoefficiens (strain JCM 10833 / BCRC 13528 / IAM 13628 / NBRC 14792 / USDA 110).